The chain runs to 447 residues: Glutamyl-tRNA reductase (447 aa).

Substrate-binding positions include 56–59, serine 119, 124–126, and glutamine 130; these read TCNR and ETQ. Cysteine 57 (nucleophile) is an active-site residue. NADP(+) is bound at residue 201–206; that stretch reads GLGEMS.

Belongs to the glutamyl-tRNA reductase family. Homodimer.

It carries out the reaction (S)-4-amino-5-oxopentanoate + tRNA(Glu) + NADP(+) = L-glutamyl-tRNA(Glu) + NADPH + H(+). It participates in porphyrin-containing compound metabolism; protoporphyrin-IX biosynthesis; 5-aminolevulinate from L-glutamyl-tRNA(Glu): step 1/2. Functionally, catalyzes the NADPH-dependent reduction of glutamyl-tRNA(Glu) to glutamate 1-semialdehyde (GSA). In Helicobacter acinonychis (strain Sheeba), this protein is Glutamyl-tRNA reductase.